Consider the following 736-residue polypeptide: MAGSSAGGGGVGETKVIYHLDEEETPYLVKIPVPAERITLGDFKSVLQRPAGAKYFFKSMDQDFGVVKEEISDDNARLPCFNGRVVSWLVSSDTPQPEVAPPAHESRTELVPPPPPLPPLPPERTSGIGDSRPPSFHPNVSSSHENLEPETETESVVSLRRDRPRRRDSSEHGAGGHRPGGPSRLERHLAGYESSSTLMTSELESTSLGDSDEDDTMSRFSSSTEQSSASRLLKRHRRRRKQRPPRMERTSSFSSVTDSTMSLNIITVTLNMEKYNFLGISIVGQSNERGDGGIYIGSIMKGGAVAADGRIEPGDMLLQVNDMNFENMSNDDAVRVLRDIVHKPGPIVLTVAKCWDPSPQAYFTLPRNEPIQPIDPAAWVSHSAALTGAFPAYPGSSSMSTITSGSSLPDGCEGRGLSVHMDMASVTKAMAAPESGLEVRDRMWLKITIPNAFLGSDVVDWLYHHVEGFPERREARKYASGLLKAGLIRHTVNKITFSEQCYYVFGDLSGGCESYLVNLSLNDNDGSSGASDQDTLAPLPGATPWPLLPTFSYQYPAPHPYSPQPPPYHELSSYTYGGGSASSQHSEGSRSSGSTRSDGGAGRTGRPEERAPESKSGSGSESELSSRGGSLRRGGEPGGTGDGGPPPSRGSTGAPPNLRALPGLHPYGAPSGMALPYNPMMVVMMPPPPPPVSTAVQPPGAPPVRDLGSVPPELTASRQSFHMAMGNPSEFFVDVM.

Residues 11 to 93 (VGETKVIYHL…RVVSWLVSSD (83 aa)) enclose the DIX domain. Positions 93-255 (DTPQPEVAPP…RMERTSSFSS (163 aa)) are disordered. The segment covering 111–122 (VPPPPPLPPLPP) has biased composition (pro residues). Positions 159–171 (LRRDRPRRRDSSE) are enriched in basic and acidic residues. Positions 193–208 (ESSSTLMTSELESTSL) are enriched in low complexity. The residue at position 211 (S211) is a Phosphoserine. The span at 218-230 (SRFSSSTEQSSAS) shows a compositional bias: polar residues. Over residues 232–244 (LLKRHRRRRKQRP) the composition is skewed to basic residues. The 73-residue stretch at 267–339 (TVTLNMEKYN…NDDAVRVLRD (73 aa)) folds into the PDZ domain. A DEP domain is found at 433-507 (PESGLEVRDR…SEQCYYVFGD (75 aa)). The segment covering 558-568 (PHPYSPQPPPY) has biased composition (pro residues). The tract at residues 558-665 (PHPYSPQPPP…PNLRALPGLH (108 aa)) is disordered. 2 stretches are compositionally biased toward low complexity: residues 581–598 (ASSQ…TRSD) and 614–629 (SKSG…SRGG).

This sequence belongs to the DSH family. Interacts through its PDZ domain with the C-terminal regions of VANGL1 and VANGL2. Interacts with Rac. Interacts with ARRB1; the interaction is enhanced by phosphorylation of DVL1. Can form large oligomers (via DIX domain). Interacts (via DIX domain) with DIXDC1 (via DIX domain). Interacts (via DEP domain) with AP2M1 and the AP-2 complex. Interacts with FAM105B/otulin. Interacts with DCDC2. Interacts (when phosphorylated) with FOXK1 and FOXK2; the interaction induces DVL2 nuclear translocation. Interacts with MAPK15. Interacts with PKD1 (via extracellular domain). Interacts with LMBR1L. Post-translationally, phosphorylated by CSNK1D. WNT3A induces DVL2 phosphorylation by CSNK1E and MARK kinases. In terms of processing, ubiquitinated via 'Lys-63'-linked polyubiquitin chains; leading to its autophagy-mediated degradation. In terms of tissue distribution, ubiquitous.

It localises to the cell membrane. The protein resides in the cytoplasm. It is found in the cytosol. The protein localises to the cytoplasmic vesicle. Its subcellular location is the nucleus. Plays a role in the signal transduction pathways mediated by multiple Wnt genes. Participates both in canonical and non-canonical Wnt signaling by binding to the cytoplasmic C-terminus of frizzled family members and transducing the Wnt signal to down-stream effectors. Promotes internalization and degradation of frizzled proteins upon Wnt signaling. The sequence is that of Segment polarity protein dishevelled homolog DVL-2 (Dvl2) from Mus musculus (Mouse).